The primary structure comprises 140 residues: L-fucose mutarotase (140 aa).

Histidine 22 functions as the Proton donor in the catalytic mechanism. Substrate contacts are provided by residues aspartate 30, arginine 107, and 129 to 131 (YGN).

The protein belongs to the RbsD / FucU family. FucU mutarotase subfamily. Homodecamer.

The protein localises to the cytoplasm. It catalyses the reaction alpha-L-fucose = beta-L-fucose. It functions in the pathway carbohydrate metabolism; L-fucose metabolism. Its function is as follows. Involved in the anomeric conversion of L-fucose. The sequence is that of L-fucose mutarotase from Salmonella typhimurium (strain LT2 / SGSC1412 / ATCC 700720).